Consider the following 281-residue polypeptide: Ras-related protein Rab-40C (281 aa).

The GTP site is built by Ser23, Gly26, Lys27, and Ser46. The segment at 41–49 (SPYAYSNGI) is switch-I. 2 residues coordinate Mg(2+): Ser46 and Asp69. Residues Gly72, Asn126, and Arg127 each coordinate GTP. A switch-II region spans residues 72-88 (GQGRFCTIFRSYSRGAQ). One can recognise an SOCS box domain in the interval 175–228 (LMRHGMEKIWRPNRVFSLQDLCCRAIVSCTPVHLIDKLPLPVTIKSHLKSFSMA). Residues 245-281 (SGAGGSGSKGNSLKRSKSIRPPQSPPQNCSRSNCKIS) form a disordered region. The segment covering 270-281 (PQNCSRSNCKIS) has biased composition (polar residues). Cys273 is lipidated: S-palmitoyl cysteine. Cys278 carries the S-geranylgeranyl cysteine lipid modification.

This sequence belongs to the small GTPase superfamily. Rab family. In terms of assembly, component of the cullin-5-RING E3 ubiquitin-protein ligase complex (ECS(RAB40C) complex) composed of CUL5, Elongin BC (ELOB and ELOC), RNF7/RBX2 and RAB40C. Interacts with protein phosphatase 6 (PP6) complex components ANKRD28, ANKRD52, PPP6C, PP6R1 and PP6R2; the interaction leads to ANKRD28 ubiquitination and decreased PP6 activity. Interacts with DAB2IP; DAB2IP acts as a GAP for RAB40C. Mg(2+) serves as cofactor.

It is found in the cell membrane. It localises to the cytoplasm. Its subcellular location is the cytosol. The protein resides in the golgi apparatus membrane. The catalysed reaction is GTP + H2O = GDP + phosphate + H(+). It functions in the pathway protein modification; protein ubiquitination. Regulated by guanine nucleotide exchange factors (GEFs) which promote the exchange of bound GDP for free GTP. Regulated by GTPase activating proteins (GAPs) including DAB2IP, which increase the GTP hydrolysis activity. Inhibited by GDP dissociation inhibitors (GDIs). Functionally, RAB40C small GTPase acts as substrate-recognition component of the ECS(RAB40C) E3 ubiquitin ligase complex which mediates the ubiquitination and subsequent proteasomal degradation of target proteins. The Rab40 subfamily belongs to the Rab family that are key regulators of intracellular membrane trafficking, from the formation of transport vesicles to their fusion with membranes. Rabs cycle between an inactive GDP-bound form and an active GTP-bound form that is able to recruit to membranes different sets of downstream effectors directly responsible for vesicle formation, movement, tethering and fusion. As part of the ECS(RAB40C) complex, mediates ANKRD28 ubiquitination and degradation, thereby inhibiting protein phosphatase 6 (PP6) complex activity and focal adhesion assembly during cell migration. Also negatively regulate lipid droplets accumulation in a GTP-dependent manner. The sequence is that of Ras-related protein Rab-40C from Mus musculus (Mouse).